Reading from the N-terminus, the 300-residue chain is Inosose dehydratase (300 aa).

Belongs to the IolE/MocC family. The cofactor is glutathione. It depends on Co(2+) as a cofactor. Requires Mn(2+) as cofactor.

It carries out the reaction scyllo-inosose = 3D-3,5/4-trihydroxycyclohexane-1,2-dione + H2O. Its pathway is polyol metabolism; myo-inositol degradation into acetyl-CoA; acetyl-CoA from myo-inositol: step 2/7. In terms of biological role, catalyzes the dehydration of inosose (2-keto-myo-inositol, 2KMI or 2,4,6/3,5-pentahydroxycyclohexanone) to 3D-(3,5/4)-trihydroxycyclohexane-1,2-dione (D-2,3-diketo-4-deoxy-epi-inositol). The polypeptide is Inosose dehydratase (Lactiplantibacillus plantarum (strain ATCC BAA-793 / NCIMB 8826 / WCFS1) (Lactobacillus plantarum)).